Here is a 602-residue protein sequence, read N- to C-terminus: Potassium-transporting ATPase potassium-binding subunit (602 aa).

The next 10 membrane-spanning stretches (helical) occupy residues 3–23, 64–84, 135–155, 178–198, 282–302, 313–333, 418–438, 456–476, 522–542, and 565–585; these read ANNL…AVPV, QYAL…YALL, GLTV…LALI, LYVL…QGVI, FSNF…CLVF, VAVL…ETSA, GLYG…LMIG, VSIV…IAVL, WMTA…VLAI, and LFVV…YMPA.

Belongs to the KdpA family. In terms of assembly, the system is composed of three essential subunits: KdpA, KdpB and KdpC.

It is found in the cell inner membrane. Functionally, part of the high-affinity ATP-driven potassium transport (or Kdp) system, which catalyzes the hydrolysis of ATP coupled with the electrogenic transport of potassium into the cytoplasm. This subunit binds the periplasmic potassium ions and delivers the ions to the membrane domain of KdpB through an intramembrane tunnel. The polypeptide is Potassium-transporting ATPase potassium-binding subunit (Burkholderia mallei (strain ATCC 23344)).